A 452-amino-acid polypeptide reads, in one-letter code: Probable 1,4-beta-D-glucan cellobiohydrolase A (452 aa).

Residues 1-17 (MHQRALLFSALAVAANA) form the signal peptide. N81 carries N-linked (GlcNAc...) asparagine glycosylation. E226 (nucleophile) is an active-site residue. Residue E231 is the Proton donor of the active site. The N-linked (GlcNAc...) asparagine glycan is linked to N284. The tract at residues 405 to 431 (ADPSKPGVARGTCEHGAGDPENVESQH) is disordered.

Belongs to the glycosyl hydrolase 7 (cellulase C) family.

The protein localises to the secreted. The enzyme catalyses Hydrolysis of (1-&gt;4)-beta-D-glucosidic linkages in cellulose and cellotetraose, releasing cellobiose from the non-reducing ends of the chains.. Its function is as follows. The biological conversion of cellulose to glucose generally requires three types of hydrolytic enzymes: (1) Endoglucanases which cut internal beta-1,4-glucosidic bonds; (2) Exocellobiohydrolases that cut the disaccharide cellobiose from the non-reducing end of the cellulose polymer chain; (3) Beta-1,4-glucosidases which hydrolyze the cellobiose and other short cello-oligosaccharides to glucose. The sequence is that of Probable 1,4-beta-D-glucan cellobiohydrolase A (cbhA) from Aspergillus fumigatus (strain CBS 144.89 / FGSC A1163 / CEA10) (Neosartorya fumigata).